The following is a 166-amino-acid chain: CDP-archaeol synthase (166 aa).

5 consecutive transmembrane segments (helical) span residues 7-27 (LLLS…GPFI), 55-75 (LIVA…FFTA), 78-98 (TLIS…GAFI), 116-136 (LDFV…ITWY), and 138-158 (FLFI…VAYL).

This sequence belongs to the CDP-archaeol synthase family. Mg(2+) serves as cofactor.

It localises to the cell membrane. It carries out the reaction 2,3-bis-O-(geranylgeranyl)-sn-glycerol 1-phosphate + CTP + H(+) = CDP-2,3-bis-O-(geranylgeranyl)-sn-glycerol + diphosphate. It participates in membrane lipid metabolism; glycerophospholipid metabolism. Its function is as follows. Catalyzes the formation of CDP-2,3-bis-(O-geranylgeranyl)-sn-glycerol (CDP-archaeol) from 2,3-bis-(O-geranylgeranyl)-sn-glycerol 1-phosphate (DGGGP) and CTP. This reaction is the third ether-bond-formation step in the biosynthesis of archaeal membrane lipids. This chain is CDP-archaeol synthase, found in Saccharolobus islandicus (strain Y.N.15.51 / Yellowstone #2) (Sulfolobus islandicus).